Consider the following 139-residue polypeptide: ATP synthase epsilon chain (139 aa).

It belongs to the ATPase epsilon chain family. As to quaternary structure, F-type ATPases have 2 components, CF(1) - the catalytic core - and CF(0) - the membrane proton channel. CF(1) has five subunits: alpha(3), beta(3), gamma(1), delta(1), epsilon(1). CF(0) has three main subunits: a, b and c.

The protein resides in the cell inner membrane. In terms of biological role, produces ATP from ADP in the presence of a proton gradient across the membrane. This chain is ATP synthase epsilon chain, found in Haemophilus ducreyi (strain 35000HP / ATCC 700724).